The chain runs to 484 residues: Adenylosuccinate synthetase, chloroplastic (484 aa).

The transit peptide at 1 to 44 directs the protein to the chloroplast; sequence MSLSTLSHPAAAAAGSGKSLFPAGPAAQSVHFPKARLPVPAAVS. GTP-binding positions include 71–77 and 99–101; these read GDEGKGK and GHT. Asp-72 (proton acceptor) is an active-site residue. Asp-72 and Gly-99 together coordinate Mg(2+). IMP is bound by residues 72 to 75, 97 to 100, Thr-189, Arg-203, Gln-283, Thr-298, and Arg-362; these read DEGK and NAGH. Residue His-100 is the Proton donor of the active site. 358 to 364 lines the substrate pocket; the sequence is TTTGRPR. GTP is bound by residues Arg-364, 390-392, and 473-475; these read KLD and GVG.

The protein belongs to the adenylosuccinate synthetase family. As to quaternary structure, homodimer. Requires Mg(2+) as cofactor.

The protein resides in the plastid. It is found in the chloroplast. It catalyses the reaction IMP + L-aspartate + GTP = N(6)-(1,2-dicarboxyethyl)-AMP + GDP + phosphate + 2 H(+). It participates in purine metabolism; AMP biosynthesis via de novo pathway; AMP from IMP: step 1/2. Its function is as follows. Plays an important role in the de novo pathway and in the salvage pathway of purine nucleotide biosynthesis. Catalyzes the first committed step in the biosynthesis of AMP from IMP. The polypeptide is Adenylosuccinate synthetase, chloroplastic (Zea mays (Maize)).